Reading from the N-terminus, the 284-residue chain is Pantothenate synthetase (284 aa).

30–37 lines the ATP pocket; sequence MGALHNGH. Histidine 37 functions as the Proton donor in the catalytic mechanism. Glutamine 61 contributes to the (R)-pantoate binding site. Glutamine 61 serves as a coordination point for beta-alanine. Residue 147-150 participates in ATP binding; the sequence is GEKD. Glutamine 153 contributes to the (R)-pantoate binding site. Residues leucine 176 and 184–187 contribute to the ATP site; that span reads SSSR.

The protein belongs to the pantothenate synthetase family. In terms of assembly, homodimer.

The protein resides in the cytoplasm. It carries out the reaction (R)-pantoate + beta-alanine + ATP = (R)-pantothenate + AMP + diphosphate + H(+). It functions in the pathway cofactor biosynthesis; (R)-pantothenate biosynthesis; (R)-pantothenate from (R)-pantoate and beta-alanine: step 1/1. Catalyzes the condensation of pantoate with beta-alanine in an ATP-dependent reaction via a pantoyl-adenylate intermediate. This chain is Pantothenate synthetase, found in Bartonella henselae (strain ATCC 49882 / DSM 28221 / CCUG 30454 / Houston 1) (Rochalimaea henselae).